The following is a 258-amino-acid chain: Acetylglutamate kinase (258 aa).

Substrate-binding positions include 41 to 42 (GG), R63, and N156.

This sequence belongs to the acetylglutamate kinase family. ArgB subfamily.

It is found in the cytoplasm. The enzyme catalyses N-acetyl-L-glutamate + ATP = N-acetyl-L-glutamyl 5-phosphate + ADP. The protein operates within amino-acid biosynthesis; L-arginine biosynthesis; N(2)-acetyl-L-ornithine from L-glutamate: step 2/4. Catalyzes the ATP-dependent phosphorylation of N-acetyl-L-glutamate. This is Acetylglutamate kinase from Bacillus velezensis (strain DSM 23117 / BGSC 10A6 / LMG 26770 / FZB42) (Bacillus amyloliquefaciens subsp. plantarum).